The sequence spans 208 residues: Protein-L-isoaspartate O-methyltransferase (208 aa).

The active site involves Ser-59.

Belongs to the methyltransferase superfamily. L-isoaspartyl/D-aspartyl protein methyltransferase family.

The protein resides in the cytoplasm. The enzyme catalyses [protein]-L-isoaspartate + S-adenosyl-L-methionine = [protein]-L-isoaspartate alpha-methyl ester + S-adenosyl-L-homocysteine. In terms of biological role, catalyzes the methyl esterification of L-isoaspartyl residues in peptides and proteins that result from spontaneous decomposition of normal L-aspartyl and L-asparaginyl residues. It plays a role in the repair and/or degradation of damaged proteins. The polypeptide is Protein-L-isoaspartate O-methyltransferase (Vibrio campbellii (strain ATCC BAA-1116)).